The primary structure comprises 327 residues: Zinc transport protein ZntB (327 aa).

Over 1–273 (MEAIKGSDVN…ARRTYTMSLM (273 aa)) the chain is Cytoplasmic. A helical transmembrane segment spans residues 274 to 294 (AMVFLPSTFLTGLFGVNLGGI). The Periplasmic segment spans residues 295 to 300 (PGGGWQ). A helical transmembrane segment spans residues 301–321 (FGFSIFCILLVVLIGGVALWL). Over 322–327 (HRSKWL) the chain is Cytoplasmic.

Belongs to the CorA metal ion transporter (MIT) (TC 1.A.35) family.

It is found in the cell inner membrane. The enzyme catalyses Zn(2+)(out) + H(+)(out) = Zn(2+)(in) + H(+)(in). Functionally, zinc transporter. Acts as a Zn(2+):proton symporter, which likely mediates zinc ion uptake. This is Zinc transport protein ZntB from Escherichia coli O8 (strain IAI1).